The primary structure comprises 332 residues: Glycerol-3-phosphate dehydrogenase [NAD(P)+] (332 aa).

NADPH is bound by residues Ser11, Trp12, Arg32, Arg33, and Lys106. Sn-glycerol 3-phosphate is bound by residues Lys106 and Gly136. Ala140 is a binding site for NADPH. Residues Lys191, Asp244, Ser254, Arg255, and Asn256 each coordinate sn-glycerol 3-phosphate. The Proton acceptor role is filled by Lys191. Arg255 contacts NADPH. 2 residues coordinate NADPH: Val280 and Glu282.

Belongs to the NAD-dependent glycerol-3-phosphate dehydrogenase family.

The protein resides in the cytoplasm. The catalysed reaction is sn-glycerol 3-phosphate + NAD(+) = dihydroxyacetone phosphate + NADH + H(+). It carries out the reaction sn-glycerol 3-phosphate + NADP(+) = dihydroxyacetone phosphate + NADPH + H(+). Its pathway is membrane lipid metabolism; glycerophospholipid metabolism. In terms of biological role, catalyzes the reduction of the glycolytic intermediate dihydroxyacetone phosphate (DHAP) to sn-glycerol 3-phosphate (G3P), the key precursor for phospholipid synthesis. This is Glycerol-3-phosphate dehydrogenase [NAD(P)+] from Corynebacterium kroppenstedtii (strain DSM 44385 / JCM 11950 / CIP 105744 / CCUG 35717).